We begin with the raw amino-acid sequence, 291 residues long: Proteasomal ubiquitin receptor ADRM1 homolog rpn1301 (291 aa).

The 114-residue stretch at 1-114 (MSLITFKAGK…ERINSYIKDQ (114 aa)) folds into the Pru domain. The interval 135–162 (TVEQSEPIAQPTESSKESSEIGAPNSDE) is disordered. The DEUBAD domain maps to 178-290 (AQAGFGGSTV…ARFVSRNNGS (113 aa)).

Belongs to the ADRM1 family. In terms of assembly, component of the 19S proteasome regulatory particle complex. The 2 S.pombe rpn13 homologs, rpn1301 and rpn1302 are present at a 0.2-1 ratio.

The protein localises to the cytoplasm. Its subcellular location is the nucleus. Component of the 26S proteasome, a multiprotein complex involved in the ATP-dependent degradation of ubiquitinated proteins. This complex plays a key role in the maintenance of protein homeostasis by removing misfolded or damaged proteins, which could impair cellular functions, and by removing proteins whose functions are no longer required. Therefore, the proteasome participates in numerous cellular processes, including cell cycle progression, apoptosis, or DNA damage repair. Within the complex, functions as a proteasomal ubiquitin receptor. The polypeptide is Proteasomal ubiquitin receptor ADRM1 homolog rpn1301 (rpn1301) (Schizosaccharomyces pombe (strain 972 / ATCC 24843) (Fission yeast)).